A 615-amino-acid chain; its full sequence is 1-deoxy-D-xylulose-5-phosphate synthase (615 aa).

Thiamine diphosphate is bound by residues His76 and Gly117–Ser119. Mg(2+) is bound at residue Asp148. Residues Gly149–Ala150, Asn177, Tyr284, and Glu365 each bind thiamine diphosphate. A Mg(2+)-binding site is contributed by Asn177.

It belongs to the transketolase family. DXPS subfamily. As to quaternary structure, homodimer. The cofactor is Mg(2+). Thiamine diphosphate is required as a cofactor.

The catalysed reaction is D-glyceraldehyde 3-phosphate + pyruvate + H(+) = 1-deoxy-D-xylulose 5-phosphate + CO2. It participates in metabolic intermediate biosynthesis; 1-deoxy-D-xylulose 5-phosphate biosynthesis; 1-deoxy-D-xylulose 5-phosphate from D-glyceraldehyde 3-phosphate and pyruvate: step 1/1. Catalyzes the acyloin condensation reaction between C atoms 2 and 3 of pyruvate and glyceraldehyde 3-phosphate to yield 1-deoxy-D-xylulose-5-phosphate (DXP). This Francisella tularensis subsp. tularensis (strain FSC 198) protein is 1-deoxy-D-xylulose-5-phosphate synthase.